A 470-amino-acid polypeptide reads, in one-letter code: UDP-N-acetylmuramate--L-alanine ligase (470 aa).

118 to 124 lines the ATP pocket; the sequence is GTHGKTT.

This sequence belongs to the MurCDEF family.

It is found in the cytoplasm. It carries out the reaction UDP-N-acetyl-alpha-D-muramate + L-alanine + ATP = UDP-N-acetyl-alpha-D-muramoyl-L-alanine + ADP + phosphate + H(+). It participates in cell wall biogenesis; peptidoglycan biosynthesis. Its function is as follows. Cell wall formation. In Cereibacter sphaeroides (strain KD131 / KCTC 12085) (Rhodobacter sphaeroides), this protein is UDP-N-acetylmuramate--L-alanine ligase.